We begin with the raw amino-acid sequence, 345 residues long: Tetraacyldisaccharide 4'-kinase (345 aa).

Residue 61–68 (TAGGTGKT) participates in ATP binding.

This sequence belongs to the LpxK family.

It catalyses the reaction a lipid A disaccharide + ATP = a lipid IVA + ADP + H(+). Its pathway is glycolipid biosynthesis; lipid IV(A) biosynthesis; lipid IV(A) from (3R)-3-hydroxytetradecanoyl-[acyl-carrier-protein] and UDP-N-acetyl-alpha-D-glucosamine: step 6/6. Functionally, transfers the gamma-phosphate of ATP to the 4'-position of a tetraacyldisaccharide 1-phosphate intermediate (termed DS-1-P) to form tetraacyldisaccharide 1,4'-bis-phosphate (lipid IVA). The sequence is that of Tetraacyldisaccharide 4'-kinase from Xanthomonas axonopodis pv. citri (strain 306).